The following is a 937-amino-acid chain: MQQPISIQQPVVNNINNSPNNQANINNNTTNNTNNNNNNNNTTNNIANNNNSNNINNNNEINNSNINNNINNGINNDIDRGGEKKANKLIAKTTKKFNKDMTAYTSGKFFELWRNQVVRDKILGYVRIHNLHYDKRVFKCIDLNNCIDNGADLQQQHNCHRVHNHYHQDLGHNYFGKVSRGIVSLSDYKYYGYLRSVHLIGYEQHEEELIKTIKSLPVGVSTLELSGHLNKIIFKEGSLPTSITNLTISSPTKLGYKSIPSHLKTLKLNSTFNDPLLVQGRLEGQLGIVPLLPIDGAITSLDTGGKFNQPFEAGLLPSSLTELAFGNEYFRPIEVGSLPSGIKSLKLGQRFCLPIPIGSLPIGLTELQLGGTQQNPILTIGCLPPTLTKLTLDNHFNQPLVIGVIPSSLKTMIFGPRYNQPLPPSVFPDSLTHLEFHQNSSYIFPLKLGYNIPSNVSTLLLSFRSQERNVTLGTNSNIKKLRCGGDYLPSLSSDDSTIGAILNSFSSSSSRETFPRSVESLHLNIVNVLDKEINIPSNVTKLIITGNNLQHDGPDVFMVGKKGSKITHLKLRGYEKPICQEMFKNLVNLKSIQFIGAYNHQLGPNCFPPQSITNLEFDCLPSVIPIGSLPSTLKSLRVKSFCTPFLKNSLPSSLLILECAFVRSFIDSYEIVDEIFVEQQAQYAQQQLLQNEQALQAQKQLEIQQQVAQQRLQQLKQQKQQQQQQQDNEQQLDHSIENNDGSIQDDHEHELEEEQENEEEEEDTNNHQHPFLQEAINHNQQLQQKQQEKYLYSSNNSNNYNYNNNSNNNNNNNSNEEDDEEEDLIQPIISKEWLPPSIHTLIIRGEPTIQLPLPESLTNIHIESKNQSILHNIPLMEKISKLVRVFDYESDTNSIFKKSLAICNNINQNQNQNNNNYNNNNNNNNNNNNNKKKNVKK.

Over residues 1–12 the composition is skewed to polar residues; the sequence is MQQPISIQQPVV. A disordered region spans residues 1–60; sequence MQQPISIQQPVVNNINNSPNNQANINNNTTNNTNNNNNNNNTTNNIANNNNSNNINNNNE. Residues 13–60 are compositionally biased toward low complexity; that stretch reads NNINNSPNNQANINNNTTNNTNNNNNNNNTTNNIANNNNSNNINNNNE. FNIP repeat units lie at residues 307–350, 354–394, 396–439, and 598–640; these read FNQP…LGQR, PIPI…TLDN, FNQP…FHQN, and YNHQ…RVKS. Residues 677 to 769 are a coiled coil; it reads VEQQAQYAQQ…EEEDTNNHQH (93 aa). The span at 719-729 shows a compositional bias: low complexity; it reads KQQQQQQQDNE. Disordered stretches follow at residues 719-767, 794-823, and 910-937; these read KQQQ…TNNH, SNNS…EEED, and QNQN…NVKK. Positions 751–763 are enriched in acidic residues; the sequence is LEEEQENEEEEED. Composition is skewed to low complexity over residues 794–814 and 910–929; these read SNNS…NNNS and QNQN…NNNN. Residues 902–937 adopt a coiled-coil conformation; that stretch reads ICNNINQNQNQNNNNYNNNNNNNNNNNNNKKKNVKK.

The chain is FNIP repeat-containing protein DDB_G0271996 from Dictyostelium discoideum (Social amoeba).